The primary structure comprises 137 residues: NADH-ubiquinone oxidoreductase chain 3 (137 aa).

The next 3 helical transmembrane spans lie at 6–26 (LFILFVSIIALLFLFINLIFA), 57–77 (FFIFALVYLLLDLEILLTFPF), and 86–106 (IYGLIILLGFITIITIGFVYE).

The protein belongs to the complex I subunit 3 family.

It is found in the mitochondrion membrane. It carries out the reaction a ubiquinone + NADH + 5 H(+)(in) = a ubiquinol + NAD(+) + 4 H(+)(out). Core subunit of the mitochondrial membrane respiratory chain NADH dehydrogenase (Complex I) that is believed to belong to the minimal assembly required for catalysis. Complex I functions in the transfer of electrons from NADH to the respiratory chain. The immediate electron acceptor for the enzyme is believed to be ubiquinone. The chain is NADH-ubiquinone oxidoreductase chain 3 (ND3) from Podospora anserina (strain S / ATCC MYA-4624 / DSM 980 / FGSC 10383) (Pleurage anserina).